We begin with the raw amino-acid sequence, 162 residues long: Lectin BRA-3 (162 aa).

A signal peptide spans 1–24; it reads MQRSEIVQAVTLLVVVFAITTAEC. Residues 25–152 form the C-type lectin domain; sequence TCPGNLDWQE…NKNKNFLCKM (128 aa). Disulfide bonds link Cys26/Cys39, Cys56/Cys150, and Cys125/Cys142.

As to quaternary structure, homotetramer; disulfide-linked. In terms of tissue distribution, coelemic fluid.

Its function is as follows. Sugar-binding protein which recognizes specific carbohydrate structures and agglutinates a variety of animal cells by binding to cell-surface glycoproteins and glycolipids. Calcium-dependent lectin. Invertebrate lectins may be involved in defense functions. The protein is Lectin BRA-3 of Megabalanus rosa (Acorn barnacle).